Consider the following 632-residue polypeptide: 1-deoxy-D-xylulose-5-phosphate synthase (632 aa).

Residues histidine 73 and 114-116 (SHA) each bind thiamine diphosphate. Residue aspartate 146 participates in Mg(2+) binding. Thiamine diphosphate-binding positions include 147–148 (GA), asparagine 176, tyrosine 287, and glutamate 368. Asparagine 176 is a Mg(2+) binding site.

Belongs to the transketolase family. DXPS subfamily. Homodimer. Mg(2+) is required as a cofactor. The cofactor is thiamine diphosphate.

It catalyses the reaction D-glyceraldehyde 3-phosphate + pyruvate + H(+) = 1-deoxy-D-xylulose 5-phosphate + CO2. Its pathway is metabolic intermediate biosynthesis; 1-deoxy-D-xylulose 5-phosphate biosynthesis; 1-deoxy-D-xylulose 5-phosphate from D-glyceraldehyde 3-phosphate and pyruvate: step 1/1. Its function is as follows. Catalyzes the acyloin condensation reaction between C atoms 2 and 3 of pyruvate and glyceraldehyde 3-phosphate to yield 1-deoxy-D-xylulose-5-phosphate (DXP). This chain is 1-deoxy-D-xylulose-5-phosphate synthase, found in Corynebacterium glutamicum (strain R).